Reading from the N-terminus, the 834-residue chain is Protein argonaute (834 aa).

Residues 210 to 326 (SLLQILMEYT…LPIEFCFVVK (117 aa)) form the PAZ domain. Residues 500–799 (YLFFILDKNS…VSNLARYQDV (300 aa)) enclose the Piwi domain.

It belongs to the argonaute family. Ago subfamily. In terms of assembly, ago1, chp1 and tas3 interact to form the core of the RNA-induced transcriptional silencing (RITS) complex. The RITS complex interacts with the RDRC complex via interaction between ago1 and hrr1. Clr4 has a role in mediating this interaction. Component of the argonaute siRNA chaperone (ARC) complex composed of ago1, arb1 and arb2. Interacts with arb1.

The protein localises to the cytoplasm. The protein resides in the nucleus. It is found in the chromosome. Its subcellular location is the centromere. It localises to the telomere. Its function is as follows. Required for G1 arrest and mating in response to nitrogen starvation. Ago1 regulation of cytokinesis and cell cycle checkpoints occurs downstream of dcr1. Required, indirectly, for regulated hyperphosphorylation of cdc2. Has a role in the RNA interference (RNAi) pathway which is important for heterochromatin formation, accurate chromosome segregation, centromere cohesion and telomere function during mitosis and meiosis. Required for silencing at the centromeres and for initiation of transcriptionally silent heterochromatin at the mating type locus. Promotes histone H3K9 methylation necessary for centromere function. Required for recruitment of swi6 and cohesin to an ectopic dg repeat. A member of the RNA-induced transcriptional silencing (RITS) complex which is involved in the biosynthesis of dsRNA from primer siRNAs provided by the RNA-directed RNA polymerase (RDRC) complex. Has ribonuclease H-like cleavage (slicing) activity towards target messages complementary to siRNA and can direct site-specific cleavage of RNA substrates via siRNA. Slicing activity is required for both post-transcriptional and transcriptional gene silencing as well as for histone H3 'Lys-10' methylation spreading, conversion of double-stranded siRNA to single-stranded siRNA and siRNA-dependent association of ago1 with chromatin. A member of the argonaute siRNA chaperone (ARC) complex which is required for histone H3K9 methylation, heterochromatin assembly and siRNA generation. The ARC complex contains mostly double-stranded siRNA. The chain is Protein argonaute (ago1) from Schizosaccharomyces pombe (strain 972 / ATCC 24843) (Fission yeast).